The sequence spans 376 residues: Chaperone protein DnaJ (376 aa).

Residues D5–G70 form the J domain. The segment at G131 to S209 adopts a CR-type zinc-finger fold. The Zn(2+) site is built by C144, C147, C161, C164, C183, C186, C197, and C200. 4 CXXCXGXG motif repeats span residues C144–G151, C161–G168, C183–G190, and C197–G204.

Belongs to the DnaJ family. In terms of assembly, homodimer. Zn(2+) serves as cofactor.

It localises to the cytoplasm. Participates actively in the response to hyperosmotic and heat shock by preventing the aggregation of stress-denatured proteins and by disaggregating proteins, also in an autonomous, DnaK-independent fashion. Unfolded proteins bind initially to DnaJ; upon interaction with the DnaJ-bound protein, DnaK hydrolyzes its bound ATP, resulting in the formation of a stable complex. GrpE releases ADP from DnaK; ATP binding to DnaK triggers the release of the substrate protein, thus completing the reaction cycle. Several rounds of ATP-dependent interactions between DnaJ, DnaK and GrpE are required for fully efficient folding. Also involved, together with DnaK and GrpE, in the DNA replication of plasmids through activation of initiation proteins. The chain is Chaperone protein DnaJ from Shigella flexneri.